A 252-amino-acid chain; its full sequence is NAD-dependent protein deacetylase (252 aa).

The region spanning 1-248 (MYLVEEAKKV…PEVISHIQSL (248 aa)) is the Deacetylase sirtuin-type domain. Residues Ala26, Thr30, Phe37, Arg38, Gln102, Val104, Asp105, and His120 each coordinate NAD(+). A nicotinamide-binding site is contributed by Phe37. Residues Val104 and Asp105 each coordinate nicotinamide. Catalysis depends on His120, which acts as the Proton acceptor. Residues Cys128, Cys131, Cys153, and Cys155 each coordinate Zn(2+). Ser191, Ser192, Asn216, and Ile234 together coordinate NAD(+).

It belongs to the sirtuin family. Class U subfamily. Zn(2+) is required as a cofactor.

The protein localises to the cytoplasm. The catalysed reaction is N(6)-acetyl-L-lysyl-[protein] + NAD(+) + H2O = 2''-O-acetyl-ADP-D-ribose + nicotinamide + L-lysyl-[protein]. Its function is as follows. NAD-dependent protein deacetylase which modulates the activities of several enzymes which are inactive in their acetylated form. Deacetylates the N-terminal lysine residue of Alba, the major archaeal chromatin protein and that, in turn, increases Alba's DNA binding affinity, thereby repressing transcription. In Sulfolobus acidocaldarius (strain ATCC 33909 / DSM 639 / JCM 8929 / NBRC 15157 / NCIMB 11770), this protein is NAD-dependent protein deacetylase.